We begin with the raw amino-acid sequence, 302 residues long: Probable protein ABIL4 (302 aa).

Disordered regions lie at residues 151–179 and 220–256; these read PSTG…YPSA and LLGK…QPGF. Over residues 161-170 the composition is skewed to polar residues; the sequence is ARLQTDNGQD.

Belongs to the ABI family. In terms of assembly, binds SCAR.

It is found in the cytoplasm. The protein localises to the cytoskeleton. Functionally, involved in regulation of actin and microtubule organization. Part of a WAVE complex that activates the Arp2/3 complex. This is Probable protein ABIL4 from Oryza sativa subsp. japonica (Rice).